The chain runs to 607 residues: UvrABC system protein C (607 aa).

The GIY-YIG domain occupies 11-89 (CKPGVYRFED…IKEFAPPCNV (79 aa)). One can recognise a UVR domain in the interval 201-236 (SSLLESLKKKMLKASKNKEYEEAAILRDKIQAAQTV).

The protein belongs to the UvrC family. As to quaternary structure, interacts with UvrB in an incision complex.

It localises to the cytoplasm. Functionally, the UvrABC repair system catalyzes the recognition and processing of DNA lesions. UvrC both incises the 5' and 3' sides of the lesion. The N-terminal half is responsible for the 3' incision and the C-terminal half is responsible for the 5' incision. The protein is UvrABC system protein C of Tropheryma whipplei (strain TW08/27) (Whipple's bacillus).